The chain runs to 363 residues: Ribosomal RNA large subunit methyltransferase M (363 aa).

S-adenosyl-L-methionine contacts are provided by residues Ser194, 227 to 230, Asp246, Asp266, and Asp284; that span reads CPGG. The active-site Proton acceptor is Lys313.

Belongs to the class I-like SAM-binding methyltransferase superfamily. RNA methyltransferase RlmE family. RlmM subfamily. As to quaternary structure, monomer.

The protein resides in the cytoplasm. It carries out the reaction cytidine(2498) in 23S rRNA + S-adenosyl-L-methionine = 2'-O-methylcytidine(2498) in 23S rRNA + S-adenosyl-L-homocysteine + H(+). Its function is as follows. Catalyzes the 2'-O-methylation at nucleotide C2498 in 23S rRNA. This Haemophilus influenzae (strain PittGG) protein is Ribosomal RNA large subunit methyltransferase M.